Consider the following 457-residue polypeptide: ATP synthase subunit beta (457 aa).

Residue 147–154 coordinates ATP; it reads GGAGVGKT.

This sequence belongs to the ATPase alpha/beta chains family. As to quaternary structure, F-type ATPases have 2 components, CF(1) - the catalytic core - and CF(0) - the membrane proton channel. CF(1) has five subunits: alpha(3), beta(3), gamma(1), delta(1), epsilon(1). CF(0) has three main subunits: a(1), b(2) and c(9-12). The alpha and beta chains form an alternating ring which encloses part of the gamma chain. CF(1) is attached to CF(0) by a central stalk formed by the gamma and epsilon chains, while a peripheral stalk is formed by the delta and b chains.

The protein localises to the cell inner membrane. The enzyme catalyses ATP + H2O + 4 H(+)(in) = ADP + phosphate + 5 H(+)(out). Its function is as follows. Produces ATP from ADP in the presence of a proton gradient across the membrane. The catalytic sites are hosted primarily by the beta subunits. This is ATP synthase subunit beta from Actinobacillus pleuropneumoniae serotype 5b (strain L20).